The chain runs to 462 residues: Alkaline phosphatase 3 (462 aa).

The first 32 residues, 1-32, serve as a signal peptide directing secretion; the sequence is MKKFPKKLLPIAVLSSIAFSSLASGSVPEASA. Asp-52 contacts Mg(2+). Asp-52 contributes to the Zn(2+) binding site. Ser-101 (phosphoserine intermediate) is an active-site residue. Mg(2+)-binding residues include Thr-154 and Glu-275. Zn(2+) is bound by residues Asp-280, His-284, Asp-322, His-323, and His-419.

It belongs to the alkaline phosphatase family. Monomer. Mg(2+) is required as a cofactor. Zn(2+) serves as cofactor.

The catalysed reaction is a phosphate monoester + H2O = an alcohol + phosphate. The sequence is that of Alkaline phosphatase 3 (phoB) from Bacillus subtilis (strain 168).